We begin with the raw amino-acid sequence, 363 residues long: Aminomethyltransferase (363 aa).

It belongs to the GcvT family. The glycine cleavage system is composed of four proteins: P, T, L and H.

It catalyses the reaction N(6)-[(R)-S(8)-aminomethyldihydrolipoyl]-L-lysyl-[protein] + (6S)-5,6,7,8-tetrahydrofolate = N(6)-[(R)-dihydrolipoyl]-L-lysyl-[protein] + (6R)-5,10-methylene-5,6,7,8-tetrahydrofolate + NH4(+). The glycine cleavage system catalyzes the degradation of glycine. The sequence is that of Aminomethyltransferase from Staphylococcus epidermidis (strain ATCC 35984 / DSM 28319 / BCRC 17069 / CCUG 31568 / BM 3577 / RP62A).